The sequence spans 137 residues: Protein FrxA (137 aa).

The polypeptide is Protein FrxA (frxA) (Pyrococcus furiosus (strain ATCC 43587 / DSM 3638 / JCM 8422 / Vc1)).